We begin with the raw amino-acid sequence, 204 residues long: Outer-membrane lipoprotein LolB (204 aa).

A signal peptide spans 1 to 16; it reads MLRHLLVFSLIALLAG. C17 carries N-palmitoyl cysteine lipidation. C17 carries S-diacylglycerol cysteine lipidation.

The protein belongs to the LolB family. Monomer.

The protein localises to the cell outer membrane. In terms of biological role, plays a critical role in the incorporation of lipoproteins in the outer membrane after they are released by the LolA protein. The protein is Outer-membrane lipoprotein LolB of Ectopseudomonas mendocina (strain ymp) (Pseudomonas mendocina).